Here is an 82-residue protein sequence, read N- to C-terminus: Large ribosomal subunit protein bL31 (82 aa).

4 residues coordinate Zn(2+): C16, C18, C37, and C40.

Belongs to the bacterial ribosomal protein bL31 family. Type A subfamily. In terms of assembly, part of the 50S ribosomal subunit. Zn(2+) serves as cofactor.

Functionally, binds the 23S rRNA. This is Large ribosomal subunit protein bL31 from Blochmanniella pennsylvanica (strain BPEN).